The sequence spans 201 residues: Urease accessory protein UreG (201 aa).

Residue 12 to 19 (GPVGSGKT) coordinates GTP.

The protein belongs to the SIMIBI class G3E GTPase family. UreG subfamily. Homodimer. UreD, UreF and UreG form a complex that acts as a GTP-hydrolysis-dependent molecular chaperone, activating the urease apoprotein by helping to assemble the nickel containing metallocenter of UreC. The UreE protein probably delivers the nickel.

The protein resides in the cytoplasm. Facilitates the functional incorporation of the urease nickel metallocenter. This process requires GTP hydrolysis, probably effectuated by UreG. This chain is Urease accessory protein UreG, found in Dechloromonas aromatica (strain RCB).